Reading from the N-terminus, the 389-residue chain is Cytochrome b (389 aa).

Transmembrane regions (helical) follow at residues 36–56 (MGSL…FLAM), 80–102 (WLIR…THIA), 117–137 (VWTV…LGYC), and 183–203 (FFAF…MHMM). 2 residues coordinate heme b: H86 and H100. Residues H187 and H201 each contribute to the heme b site. H206 is an a ubiquinone binding site. 4 helical membrane-spanning segments follow: residues 229 to 249 (FVFK…LFVF), 293 to 313 (LLGV…PITD), 325 to 345 (LSKF…IIGM), and 352 to 372 (FVLI…IIVP).

This sequence belongs to the cytochrome b family. In terms of assembly, fungal cytochrome b-c1 complex contains 10 subunits; 3 respiratory subunits, 2 core proteins and 5 low-molecular weight proteins. Cytochrome b-c1 complex is a homodimer. It depends on heme b as a cofactor.

Its subcellular location is the mitochondrion inner membrane. Functionally, component of the ubiquinol-cytochrome c reductase complex (complex III or cytochrome b-c1 complex) that is part of the mitochondrial respiratory chain. The b-c1 complex mediates electron transfer from ubiquinol to cytochrome c. Contributes to the generation of a proton gradient across the mitochondrial membrane that is then used for ATP synthesis. The chain is Cytochrome b (COB) from Vanderwaltozyma polyspora (strain ATCC 22028 / DSM 70294 / BCRC 21397 / CBS 2163 / NBRC 10782 / NRRL Y-8283 / UCD 57-17) (Kluyveromyces polysporus).